The primary structure comprises 546 residues: Phosphomethylpyrimidine synthase (546 aa).

Over residues 1 to 19 (MSTPSSRSQAPETVTTGPI) the composition is skewed to polar residues. The interval 1–20 (MSTPSSRSQAPETVTTGPIQ) is disordered. Residues Asn146, Met175, Tyr204, His240, 260–262 (SRG), 301–304 (DGLR), and Glu340 each bind substrate. Position 344 (His344) interacts with Zn(2+). Tyr367 is a binding site for substrate. His408 contributes to the Zn(2+) binding site. Residues Cys488, Cys491, and Cys496 each coordinate [4Fe-4S] cluster.

This sequence belongs to the ThiC family. [4Fe-4S] cluster serves as cofactor.

The enzyme catalyses 5-amino-1-(5-phospho-beta-D-ribosyl)imidazole + S-adenosyl-L-methionine = 4-amino-2-methyl-5-(phosphooxymethyl)pyrimidine + CO + 5'-deoxyadenosine + formate + L-methionine + 3 H(+). It functions in the pathway cofactor biosynthesis; thiamine diphosphate biosynthesis. In terms of biological role, catalyzes the synthesis of the hydroxymethylpyrimidine phosphate (HMP-P) moiety of thiamine from aminoimidazole ribotide (AIR) in a radical S-adenosyl-L-methionine (SAM)-dependent reaction. This chain is Phosphomethylpyrimidine synthase, found in Mycobacteroides abscessus (strain ATCC 19977 / DSM 44196 / CCUG 20993 / CIP 104536 / JCM 13569 / NCTC 13031 / TMC 1543 / L948) (Mycobacterium abscessus).